Here is a 379-residue protein sequence, read N- to C-terminus: UDP-N-acetylglucosamine--N-acetylmuramyl-(pentapeptide) pyrophosphoryl-undecaprenol N-acetylglucosamine transferase (379 aa).

UDP-N-acetyl-alpha-D-glucosamine contacts are provided by residues 17 to 19, Asn-128, Arg-169, Ser-197, and Gln-298; that span reads TGG.

It belongs to the glycosyltransferase 28 family. MurG subfamily.

The protein localises to the cell inner membrane. It carries out the reaction di-trans,octa-cis-undecaprenyl diphospho-N-acetyl-alpha-D-muramoyl-L-alanyl-D-glutamyl-meso-2,6-diaminopimeloyl-D-alanyl-D-alanine + UDP-N-acetyl-alpha-D-glucosamine = di-trans,octa-cis-undecaprenyl diphospho-[N-acetyl-alpha-D-glucosaminyl-(1-&gt;4)]-N-acetyl-alpha-D-muramoyl-L-alanyl-D-glutamyl-meso-2,6-diaminopimeloyl-D-alanyl-D-alanine + UDP + H(+). It participates in cell wall biogenesis; peptidoglycan biosynthesis. Cell wall formation. Catalyzes the transfer of a GlcNAc subunit on undecaprenyl-pyrophosphoryl-MurNAc-pentapeptide (lipid intermediate I) to form undecaprenyl-pyrophosphoryl-MurNAc-(pentapeptide)GlcNAc (lipid intermediate II). This Brucella abortus (strain S19) protein is UDP-N-acetylglucosamine--N-acetylmuramyl-(pentapeptide) pyrophosphoryl-undecaprenol N-acetylglucosamine transferase.